The following is a 102-amino-acid chain: Nuclear protein 2 (102 aa).

Disordered stretches follow at residues 1-26 (MDPPTRPSVSGPRTRARPPPPEALPT) and 46-102 (PASG…TRLA). Residues 85-102 (QRKRRQRQLQPRPRTRLA) are compositionally biased toward basic residues.

It belongs to the NUPR family.

The protein resides in the nucleus. In terms of biological role, acts as a transcriptional repressor by inhibiting gene expression at the NUPR1 promoter in a p53/TP53-dependent manner in cancer cells. Involved in the G1 cell cycle arrest, and in a decrease in cell viability and cell proliferation of pancreatic cancer cells. Plays a role as a negative regulator of the protumoral factor NUPR1. The sequence is that of Nuclear protein 2 from Mus musculus (Mouse).